The sequence spans 405 residues: L-carnitine CoA-transferase (405 aa).

CoA contacts are provided by Lys-97 and Arg-104. Asp-169 acts as the Nucleophile in catalysis.

Belongs to the CoA-transferase III family. CaiB subfamily. Homodimer.

The protein localises to the cytoplasm. It carries out the reaction crotonobetainyl-CoA + (R)-carnitine = crotonobetaine + (R)-carnitinyl-CoA. It catalyses the reaction 4-(trimethylamino)butanoyl-CoA + (R)-carnitine = (R)-carnitinyl-CoA + 4-(trimethylamino)butanoate. It participates in amine and polyamine metabolism; carnitine metabolism. Functionally, catalyzes the reversible transfer of the CoA moiety from gamma-butyrobetainyl-CoA to L-carnitine to generate L-carnitinyl-CoA and gamma-butyrobetaine. Is also able to catalyze the reversible transfer of the CoA moiety from gamma-butyrobetainyl-CoA or L-carnitinyl-CoA to crotonobetaine to generate crotonobetainyl-CoA. The protein is L-carnitine CoA-transferase of Escherichia coli O139:H28 (strain E24377A / ETEC).